The following is a 239-amino-acid chain: Phosphoribosylaminoimidazole-succinocarboxamide synthase (239 aa).

It belongs to the SAICAR synthetase family.

The enzyme catalyses 5-amino-1-(5-phospho-D-ribosyl)imidazole-4-carboxylate + L-aspartate + ATP = (2S)-2-[5-amino-1-(5-phospho-beta-D-ribosyl)imidazole-4-carboxamido]succinate + ADP + phosphate + 2 H(+). It functions in the pathway purine metabolism; IMP biosynthesis via de novo pathway; 5-amino-1-(5-phospho-D-ribosyl)imidazole-4-carboxamide from 5-amino-1-(5-phospho-D-ribosyl)imidazole-4-carboxylate: step 1/2. This chain is Phosphoribosylaminoimidazole-succinocarboxamide synthase, found in Brevibacillus brevis (strain 47 / JCM 6285 / NBRC 100599).